The chain runs to 364 residues: Chorismate synthase (364 aa).

Positions 48 and 54 each coordinate NADP(+). FMN is bound by residues 125-127 (RSS), glycine 282, 297-301 (KPPAS), and arginine 323.

This sequence belongs to the chorismate synthase family. Homotetramer. The cofactor is FMNH2.

The catalysed reaction is 5-O-(1-carboxyvinyl)-3-phosphoshikimate = chorismate + phosphate. Its pathway is metabolic intermediate biosynthesis; chorismate biosynthesis; chorismate from D-erythrose 4-phosphate and phosphoenolpyruvate: step 7/7. Its function is as follows. Catalyzes the anti-1,4-elimination of the C-3 phosphate and the C-6 proR hydrogen from 5-enolpyruvylshikimate-3-phosphate (EPSP) to yield chorismate, which is the branch point compound that serves as the starting substrate for the three terminal pathways of aromatic amino acid biosynthesis. This reaction introduces a second double bond into the aromatic ring system. This is Chorismate synthase from Chloroflexus aggregans (strain MD-66 / DSM 9485).